Reading from the N-terminus, the 396-residue chain is Probable peptidoglycan glycosyltransferase FtsW (396 aa).

At 1–27 (MPFLDKVKQQYEDWTRITPSNLLYDRA) the chain is on the cytoplasmic side. Residues 28–48 (LLLLFFVLLLIGLLAVSSASI) traverse the membrane as a helical segment. The Periplasmic portion of the chain corresponds to 49-64 (PVGTRLFKDPFYFAKR). Residues 65–85 (DAIYVFLSCVTCYLCVQVPME) form a helical membrane-spanning segment. At 86-93 (KWEQWHVR) the chain is on the cytoplasmic side. A helical transmembrane segment spans residues 94–114 (LFAFAIFLLILVLIPGIGLSV). The Periplasmic segment spans residues 115-122 (NGARRWIP). The chain crosses the membrane as a helical span at residues 123-143 (MVLFNFQPAEFAKLALTCFLA). The Cytoplasmic segment spans residues 144 to 157 (SYFTRKYDEVRSRK). Residues 158–178 (LSAFKPFALMGLMGLFLLSQP) traverse the membrane as a helical segment. Residues 179–183 (DLGST) lie on the Periplasmic side of the membrane. Helical transmembrane passes span 184 to 204 (VVLF…FWQF) and 205 to 225 (VGLM…SAYR). Topologically, residues 226 to 285 (LKRFTGFLDPFKDPYGTGFQLSNSLMAFGRGEWVGEGLGNSIQKLEYLPEAHTDFVMAVV) are periplasmic. A helical membrane pass occupies residues 286 to 306 (GEEFGFLGILVIVILLGLLIF). The Cytoplasmic portion of the chain corresponds to 307 to 323 (RAMKIGRESLLLEQRFK). A helical transmembrane segment spans residues 324 to 344 (GFFAFGISFWIFFQGFVNLGM). Topologically, residues 345–355 (SLGLLPTKGLT) are periplasmic. The helical transmembrane segment at 356-376 (FPLISYGGSSLIIMSMTIGLL) threads the bilayer. Over 377-396 (LRIDHENRLMRIGQARLRDD) the chain is Cytoplasmic.

The protein belongs to the SEDS family. FtsW subfamily.

It is found in the cell inner membrane. The catalysed reaction is [GlcNAc-(1-&gt;4)-Mur2Ac(oyl-L-Ala-gamma-D-Glu-L-Lys-D-Ala-D-Ala)](n)-di-trans,octa-cis-undecaprenyl diphosphate + beta-D-GlcNAc-(1-&gt;4)-Mur2Ac(oyl-L-Ala-gamma-D-Glu-L-Lys-D-Ala-D-Ala)-di-trans,octa-cis-undecaprenyl diphosphate = [GlcNAc-(1-&gt;4)-Mur2Ac(oyl-L-Ala-gamma-D-Glu-L-Lys-D-Ala-D-Ala)](n+1)-di-trans,octa-cis-undecaprenyl diphosphate + di-trans,octa-cis-undecaprenyl diphosphate + H(+). The protein operates within cell wall biogenesis; peptidoglycan biosynthesis. Functionally, peptidoglycan polymerase that is essential for cell division. The polypeptide is Probable peptidoglycan glycosyltransferase FtsW (Pasteurella multocida (strain Pm70)).